A 284-amino-acid chain; its full sequence is MPELPEVETVRLGLEKVTVGMQIMGGEVLYPRTIAHPQSPQVFIQGLQDATFLSWMRRGKYLLSQLSFSTQQPSGWLGVHLRMTGQLLWVAQDEPVQKHTRVRLFFVNNRELRFVDQRTFGQMWWVAPTEDPKQVISGLQKLGPEPFSEEFSVDYFWESLQGRKRSIKSALLDQALVAGVGNIYADEALFMSEIRPTTACHQLQTEQVQRLRTAIIEVLSTSIGAGGTTFSDFRDLKGVNGNYGGMAWVYGRQGQPCRTCGQTIERIKLVGRSTHFCPQCQPES.

Proline 2 acts as the Schiff-base intermediate with DNA in catalysis. Residue glutamate 3 is the Proton donor of the active site. Catalysis depends on lysine 60, which acts as the Proton donor; for beta-elimination activity. DNA contacts are provided by histidine 99, arginine 118, and arginine 163. The FPG-type zinc finger occupies 248–282 (WVYGRQGQPCRTCGQTIERIKLVGRSTHFCPQCQP). Arginine 272 serves as the catalytic Proton donor; for delta-elimination activity.

This sequence belongs to the FPG family. In terms of assembly, monomer. Zn(2+) is required as a cofactor.

The enzyme catalyses Hydrolysis of DNA containing ring-opened 7-methylguanine residues, releasing 2,6-diamino-4-hydroxy-5-(N-methyl)formamidopyrimidine.. The catalysed reaction is 2'-deoxyribonucleotide-(2'-deoxyribose 5'-phosphate)-2'-deoxyribonucleotide-DNA = a 3'-end 2'-deoxyribonucleotide-(2,3-dehydro-2,3-deoxyribose 5'-phosphate)-DNA + a 5'-end 5'-phospho-2'-deoxyribonucleoside-DNA + H(+). In terms of biological role, involved in base excision repair of DNA damaged by oxidation or by mutagenic agents. Acts as a DNA glycosylase that recognizes and removes damaged bases. Has a preference for oxidized purines, such as 7,8-dihydro-8-oxoguanine (8-oxoG). Has AP (apurinic/apyrimidinic) lyase activity and introduces nicks in the DNA strand. Cleaves the DNA backbone by beta-delta elimination to generate a single-strand break at the site of the removed base with both 3'- and 5'-phosphates. This chain is Formamidopyrimidine-DNA glycosylase, found in Acaryochloris marina (strain MBIC 11017).